We begin with the raw amino-acid sequence, 863 residues long: Alanine--tRNA ligase (863 aa).

Zn(2+)-binding residues include His552, His556, Cys654, and His658.

It belongs to the class-II aminoacyl-tRNA synthetase family. The cofactor is Zn(2+).

It localises to the cytoplasm. The catalysed reaction is tRNA(Ala) + L-alanine + ATP = L-alanyl-tRNA(Ala) + AMP + diphosphate. In terms of biological role, catalyzes the attachment of alanine to tRNA(Ala) in a two-step reaction: alanine is first activated by ATP to form Ala-AMP and then transferred to the acceptor end of tRNA(Ala). Also edits incorrectly charged Ser-tRNA(Ala) and Gly-tRNA(Ala) via its editing domain. The protein is Alanine--tRNA ligase of Nitrosomonas europaea (strain ATCC 19718 / CIP 103999 / KCTC 2705 / NBRC 14298).